Reading from the N-terminus, the 365-residue chain is D-alanine--D-alanine ligase (365 aa).

Residues 135–345 (KLLLKSFNIP…YGSLVDKLIA (211 aa)) form the ATP-grasp domain. Position 168 to 223 (168 to 223 (KQSLDYPVIVKPAMLGSSIGISIAYNETQIEKCIEEAFAYDLTVVIEKFMRAREIE)) interacts with ATP. Residues aspartate 298, glutamate 312, and asparagine 314 each coordinate Mg(2+).

The protein belongs to the D-alanine--D-alanine ligase family. Mg(2+) is required as a cofactor. It depends on Mn(2+) as a cofactor.

It localises to the cytoplasm. The enzyme catalyses 2 D-alanine + ATP = D-alanyl-D-alanine + ADP + phosphate + H(+). The protein operates within cell wall biogenesis; peptidoglycan biosynthesis. In terms of biological role, cell wall formation. The sequence is that of D-alanine--D-alanine ligase from Borrelia turicatae (strain 91E135).